The sequence spans 301 residues: Light-independent protochlorophyllide reductase iron-sulfur ATP-binding protein (301 aa).

The segment covering 1-13 (MNVTLRPPLAAAP) has biased composition (low complexity). Residues 1–22 (MNVTLRPPLAAAPRRPDGAGSV) are disordered. ATP contacts are provided by residues 45–50 (GIGKST) and lysine 74. Position 49 (serine 49) interacts with Mg(2+). Positions 130 and 164 each coordinate [4Fe-4S] cluster. ATP contacts are provided by residues 215–216 (NR) and 239–241 (PDL).

Belongs to the NifH/BchL/ChlL family. Homodimer. Protochlorophyllide reductase is composed of three subunits; BchL, BchN and BchB. The cofactor is [4Fe-4S] cluster.

It carries out the reaction chlorophyllide a + oxidized 2[4Fe-4S]-[ferredoxin] + 2 ADP + 2 phosphate = protochlorophyllide a + reduced 2[4Fe-4S]-[ferredoxin] + 2 ATP + 2 H2O. The protein operates within porphyrin-containing compound metabolism; bacteriochlorophyll biosynthesis (light-independent). Functionally, component of the dark-operative protochlorophyllide reductase (DPOR) that uses Mg-ATP and reduced ferredoxin to reduce ring D of protochlorophyllide (Pchlide) to form chlorophyllide a (Chlide). This reaction is light-independent. The L component serves as a unique electron donor to the NB-component of the complex, and binds Mg-ATP. The chain is Light-independent protochlorophyllide reductase iron-sulfur ATP-binding protein from Bradyrhizobium sp. (strain ORS 278).